A 349-amino-acid polypeptide reads, in one-letter code: MTATTATAPTMRGGGRNELPPHLDDNLLTPRFYTTEFDKAAKTDLDIARKDFEAMFKEMEADYNLKHFDRKASLERLSELSPEDKAIYESYLVRSVVSEFSGFLLFKEISNRFKKAGRQELGQFFTFLARDEARHAGFLGRALKAEGINVDLPNLGNKRAATFFPLSWVLYSLYLSEKIGYWRYILINRHLNDNPEKVCAPLFDFFEPWCQDENRHGDCINLMMRCWPGMTKGFRGKLLSRFFLWSVFLTHTLTVCERGDFYGLLGIDPVLFDEEVIIQTNNTSRNAFPWVYNFDDGKFLEMRVQILKAFRNWRESSGLAKPVALSKFVSLILRQFALPMQKTNAVRYG.

Over residues 1-10 (MTATTATAPT) the composition is skewed to low complexity. A disordered region spans residues 1–23 (MTATTATAPTMRGGGRNELPPHL).

Belongs to the AcsF family. It depends on Fe cation as a cofactor.

The enzyme catalyses Mg-protoporphyrin IX 13-monomethyl ester + 3 NADPH + 3 O2 + 2 H(+) = 3,8-divinyl protochlorophyllide a + 3 NADP(+) + 5 H2O. It participates in porphyrin-containing compound metabolism; chlorophyll biosynthesis (light-independent). Functionally, catalyzes the formation of the isocyclic ring in chlorophyll biosynthesis. Mediates the cyclase reaction, which results in the formation of divinylprotochlorophyllide (Pchlide) characteristic of all chlorophylls from magnesium-protoporphyrin IX 13-monomethyl ester (MgPMME). This chain is Magnesium-protoporphyrin IX monomethyl ester [oxidative] cyclase, found in Prochlorococcus marinus (strain MIT 9313).